Here is a 206-residue protein sequence, read N- to C-terminus: Imidazoleglycerol-phosphate dehydratase (206 aa).

The protein belongs to the imidazoleglycerol-phosphate dehydratase family.

It localises to the cytoplasm. It carries out the reaction D-erythro-1-(imidazol-4-yl)glycerol 3-phosphate = 3-(imidazol-4-yl)-2-oxopropyl phosphate + H2O. Its pathway is amino-acid biosynthesis; L-histidine biosynthesis; L-histidine from 5-phospho-alpha-D-ribose 1-diphosphate: step 6/9. This chain is Imidazoleglycerol-phosphate dehydratase, found in Synechococcus sp. (strain JA-3-3Ab) (Cyanobacteria bacterium Yellowstone A-Prime).